The primary structure comprises 795 residues: Phenylalanine--tRNA ligase beta subunit (795 aa).

The tRNA-binding domain maps to 39–148 (AGTFNGVKVG…IDAPIGMDFR (110 aa)). The B5 domain maps to 401–476 (PKPNKVALRR…RIYGYDNIPN (76 aa)). D454, D460, E463, and E464 together coordinate Mg(2+). Positions 701 to 794 (SKFPANRRDI…VSEKFGASLR (94 aa)) constitute an FDX-ACB domain.

Belongs to the phenylalanyl-tRNA synthetase beta subunit family. Type 1 subfamily. Tetramer of two alpha and two beta subunits. Mg(2+) serves as cofactor.

Its subcellular location is the cytoplasm. It catalyses the reaction tRNA(Phe) + L-phenylalanine + ATP = L-phenylalanyl-tRNA(Phe) + AMP + diphosphate + H(+). This Vibrio vulnificus (strain YJ016) protein is Phenylalanine--tRNA ligase beta subunit.